The following is a 78-amino-acid chain: Large ribosomal subunit protein bL28 (78 aa).

This sequence belongs to the bacterial ribosomal protein bL28 family.

This chain is Large ribosomal subunit protein bL28, found in Flavobacterium johnsoniae (strain ATCC 17061 / DSM 2064 / JCM 8514 / BCRC 14874 / CCUG 350202 / NBRC 14942 / NCIMB 11054 / UW101) (Cytophaga johnsonae).